The sequence spans 274 residues: 2,3,4,5-tetrahydropyridine-2,6-dicarboxylate N-succinyltransferase (274 aa).

Substrate contacts are provided by arginine 104 and aspartate 141.

It belongs to the transferase hexapeptide repeat family. Homotrimer.

The protein localises to the cytoplasm. The catalysed reaction is (S)-2,3,4,5-tetrahydrodipicolinate + succinyl-CoA + H2O = (S)-2-succinylamino-6-oxoheptanedioate + CoA. It participates in amino-acid biosynthesis; L-lysine biosynthesis via DAP pathway; LL-2,6-diaminopimelate from (S)-tetrahydrodipicolinate (succinylase route): step 1/3. This chain is 2,3,4,5-tetrahydropyridine-2,6-dicarboxylate N-succinyltransferase, found in Escherichia coli O127:H6 (strain E2348/69 / EPEC).